The following is a 30-amino-acid chain: Cycloviolacin-O7 (30 aa).

The cyclopeptide (Ser-Asn) cross-link spans 1 to 30 (SIPCGESCVWIPCTITALAGCKCKSKVCYN). Intrachain disulfides connect C4-C21, C8-C23, and C13-C28.

In terms of processing, this is a cyclic peptide.

Functionally, probably participates in a plant defense mechanism. The chain is Cycloviolacin-O7 from Viola odorata (Sweet violet).